Here is a 504-residue protein sequence, read N- to C-terminus: ATP synthase subunit alpha 2 (504 aa).

169–176 (GDRQTGKT) provides a ligand contact to ATP.

Belongs to the ATPase alpha/beta chains family. In terms of assembly, F-type ATPases have 2 components, CF(1) - the catalytic core - and CF(0) - the membrane proton channel. CF(1) has five subunits: alpha(3), beta(3), gamma(1), delta(1), epsilon(1). CF(0) has three main subunits: a(1), b(2) and c(9-12). The alpha and beta chains form an alternating ring which encloses part of the gamma chain. CF(1) is attached to CF(0) by a central stalk formed by the gamma and epsilon chains, while a peripheral stalk is formed by the delta and b chains.

It is found in the cell membrane. The catalysed reaction is ATP + H2O + 4 H(+)(in) = ADP + phosphate + 5 H(+)(out). Functionally, produces ATP from ADP in the presence of a proton gradient across the membrane. The alpha chain is a regulatory subunit. The polypeptide is ATP synthase subunit alpha 2 (Listeria monocytogenes serotype 4b (strain F2365)).